Consider the following 768-residue polypeptide: UPF0313 protein VV2143 (768 aa).

Residues 363–640 (AYDMIKTSVN…LHKALLRYHD (278 aa)) form the Radical SAM core domain. The [4Fe-4S] cluster site is built by Cys-377, Cys-381, and Cys-384. The disordered stretch occupies residues 674 to 768 (DARTPAQRRK…GGRNQPSRAR (95 aa)). The span at 679–689 (AQRRKSGRHGA) shows a compositional bias: basic residues. A compositionally biased stretch (polar residues) spans 719–731 (GGQSNSAPSRSGS).

It belongs to the UPF0313 family. The cofactor is [4Fe-4S] cluster.

This Vibrio vulnificus (strain YJ016) protein is UPF0313 protein VV2143.